The chain runs to 120 residues: Peptidyl-tRNA hydrolase (120 aa).

Belongs to the PTH2 family.

The protein resides in the cytoplasm. It catalyses the reaction an N-acyl-L-alpha-aminoacyl-tRNA + H2O = an N-acyl-L-amino acid + a tRNA + H(+). The natural substrate for this enzyme may be peptidyl-tRNAs which drop off the ribosome during protein synthesis. In Pyrobaculum aerophilum (strain ATCC 51768 / DSM 7523 / JCM 9630 / CIP 104966 / NBRC 100827 / IM2), this protein is Peptidyl-tRNA hydrolase.